Reading from the N-terminus, the 165-residue chain is Probable bacterial non-heme ferritin-like protein (165 aa).

The region spanning 1–145 (MLSENVVKLL…SILDKLNFLG (145 aa)) is the Ferritin-like diiron domain. Fe cation is bound by residues Glu-17, Glu-50, His-53, Glu-94, and Gln-127.

The protein belongs to the ferritin family. Prokaryotic subfamily.

It localises to the cytoplasm. In Haemophilus influenzae (strain ATCC 51907 / DSM 11121 / KW20 / Rd), this protein is Probable bacterial non-heme ferritin-like protein (ftnB).